The sequence spans 142 residues: Large ribosomal subunit protein uL13 (142 aa).

This sequence belongs to the universal ribosomal protein uL13 family. Part of the 50S ribosomal subunit.

In terms of biological role, this protein is one of the early assembly proteins of the 50S ribosomal subunit, although it is not seen to bind rRNA by itself. It is important during the early stages of 50S assembly. The polypeptide is Large ribosomal subunit protein uL13 (Pseudomonas syringae pv. tomato (strain ATCC BAA-871 / DC3000)).